A 209-amino-acid chain; its full sequence is NAD(P)H dehydrogenase (quinone) (209 aa).

The 196-residue stretch at 4-199 folds into the Flavodoxin-like domain; it reads VNIIFYSMYG…AMARYQGRHV (196 aa). FMN contacts are provided by residues 10 to 15 and 87 to 89; these read SMYGHV and TRY. Y12 lines the NAD(+) pocket. W107 serves as a coordination point for substrate. Residues 122-128 and H143 contribute to the FMN site; that span reads SSGTQHG.

It belongs to the WrbA family. It depends on FMN as a cofactor.

The enzyme catalyses a quinone + NADH + H(+) = a quinol + NAD(+). It carries out the reaction a quinone + NADPH + H(+) = a quinol + NADP(+). In Methanosarcina acetivorans (strain ATCC 35395 / DSM 2834 / JCM 12185 / C2A), this protein is NAD(P)H dehydrogenase (quinone).